Here is a 159-residue protein sequence, read N- to C-terminus: Cyclic pyranopterin monophosphate synthase (159 aa).

Substrate contacts are provided by residues 75-77 (LCH) and 113-114 (ME). Asp128 is an active-site residue.

It belongs to the MoaC family. As to quaternary structure, homohexamer; trimer of dimers.

The catalysed reaction is (8S)-3',8-cyclo-7,8-dihydroguanosine 5'-triphosphate = cyclic pyranopterin phosphate + diphosphate. It participates in cofactor biosynthesis; molybdopterin biosynthesis. In terms of biological role, catalyzes the conversion of (8S)-3',8-cyclo-7,8-dihydroguanosine 5'-triphosphate to cyclic pyranopterin monophosphate (cPMP). This chain is Cyclic pyranopterin monophosphate synthase, found in Photorhabdus laumondii subsp. laumondii (strain DSM 15139 / CIP 105565 / TT01) (Photorhabdus luminescens subsp. laumondii).